Here is a 489-residue protein sequence, read N- to C-terminus: PAT complex subunit CCDC47 (489 aa).

The first 20 residues, 1-20 (MILFTRLLAVSLLLVSGAFA), serve as a signal peptide directing secretion. The Cytoplasmic segment spans residues 21-141 (KFQEFDDSDD…PAHLQNSWES (121 aa)). Composition is skewed to acidic residues over residues 33 to 47 (EYDD…DAAD) and 62 to 103 (KEDE…EPYD). The interval 33-103 (EYDDNDFAEF…EGDADAEPYD (71 aa)) is disordered. The helical transmembrane segment at 142 to 162 (YYMEILMVTGLLAYIMNYIIG) threads the bilayer. At 163-489 (KNKNSRLAQA…KMKQIKVKAM (327 aa)) the chain is on the lumenal side. Residues 428 to 489 (HVQRQEAAQT…KMKQIKVKAM (62 aa)) are a coiled coil. Residues 430 to 489 (QRQEAAQTRREEKKRAEKERIMNEEDPEKQRRLEEAAQRREQKKIEKKQMKMKQIKVKAM) are disordered. Residues 436–478 (QTRREEKKRAEKERIMNEEDPEKQRRLEEAAQRREQKKIEKKQ) show a composition bias toward basic and acidic residues. Basic residues predominate over residues 479–489 (MKMKQIKVKAM).

The protein belongs to the CCDC47 family. In terms of assembly, component of the multi-pass translocon (MPT) complex.

Its subcellular location is the endoplasmic reticulum membrane. The protein localises to the rough endoplasmic reticulum membrane. Functionally, component of the multi-pass translocon (MPT) complex that mediates insertion of multi-pass membrane proteins into the lipid bilayer of membranes. The MPT complex takes over after the SEC61 complex: following membrane insertion of the first few transmembrane segments of proteins by the SEC61 complex, the MPT complex occludes the lateral gate of the SEC61 complex to promote insertion of subsequent transmembrane regions. The polypeptide is PAT complex subunit CCDC47 (ccdc47) (Xenopus laevis (African clawed frog)).